Consider the following 297-residue polypeptide: tRNA-cytidine(32) 2-sulfurtransferase (297 aa).

Positions 45-50 (SGGKDS) match the PP-loop motif motif. [4Fe-4S] cluster is bound by residues C120, C123, and C211.

Belongs to the TtcA family. As to quaternary structure, homodimer. It depends on Mg(2+) as a cofactor. [4Fe-4S] cluster serves as cofactor.

It is found in the cytoplasm. The enzyme catalyses cytidine(32) in tRNA + S-sulfanyl-L-cysteinyl-[cysteine desulfurase] + AH2 + ATP = 2-thiocytidine(32) in tRNA + L-cysteinyl-[cysteine desulfurase] + A + AMP + diphosphate + H(+). The protein operates within tRNA modification. In terms of biological role, catalyzes the ATP-dependent 2-thiolation of cytidine in position 32 of tRNA, to form 2-thiocytidine (s(2)C32). The sulfur atoms are provided by the cysteine/cysteine desulfurase (IscS) system. This chain is tRNA-cytidine(32) 2-sulfurtransferase, found in Vibrio campbellii (strain ATCC BAA-1116).